Reading from the N-terminus, the 315-residue chain is Protein OPG185 (315 aa).

A signal peptide spans 1–16; the sequence is MTRLPILLLLISLVYA. The 105-residue stretch at 17 to 121 folds into the Ig-like V-type domain; sequence TPFPQTSKKI…NDTDKVDYEE (105 aa). The Virion surface portion of the chain corresponds to 17-279; sequence TPFPQTSKKI…SNYKTKDFVE (263 aa). A disulfide bond links Cys-34 and Cys-103. N-linked (GlcNAc...) asparagine; by host glycans are attached at residues Asn-37, Asn-69, Asn-112, and Asn-161. Residues 193-202 show a composition bias toward polar residues; that stretch reads NTVSASSGES. Positions 193–213 are disordered; it reads NTVSASSGESTTDETPEPITD. N-linked (GlcNAc...) asparagine; by host glycosylation is present at Asn-254. Residues 280-303 traverse the membrane as a helical segment; the sequence is IFGITALIILSAVAIFCITYYIYN. Residues 304–315 lie on the Intravirion side of the membrane; the sequence is KRSRKYKTENKV.

Belongs to the orthopoxvirus OPG185 family. Heterodimerizes with OPG040. The heterodimer OPG185-OPG040 interacts with components of the entry fusion complex OPG143 and OPG094. Heterodimer with C3/VPC protein; disulfide-linked. In terms of processing, glycosylated; contains phosphate and sulfate-substituted glycans. O-glycosylation is required for hemagglutination and hemadsorption activities of infected cell membranes.

It is found in the virion membrane. The protein resides in the host membrane. Functionally, prevents cell to cell fusion by interacting with and directing the viral OPG040 protein on the host plasma membrane. The OPG185-OPG040 complex associates with components of the entry fusion complex (EFC) presumably to avoid superinfection and syncytium formation. Via its interaction with C3/VCP protein, protects the infected cell and probably also the extracellular enveloped virus from complement attack. The sequence is that of Protein OPG185 (OPG185) from Homo sapiens (Human).